A 486-amino-acid chain; its full sequence is UDP-N-acetylmuramate--L-alanine ligase (486 aa).

126–132 serves as a coordination point for ATP; that stretch reads GTHGKTS.

It belongs to the MurCDEF family.

The protein resides in the cytoplasm. It carries out the reaction UDP-N-acetyl-alpha-D-muramate + L-alanine + ATP = UDP-N-acetyl-alpha-D-muramoyl-L-alanine + ADP + phosphate + H(+). It participates in cell wall biogenesis; peptidoglycan biosynthesis. Cell wall formation. The polypeptide is UDP-N-acetylmuramate--L-alanine ligase (Corynebacterium glutamicum (strain R)).